The following is a 201-amino-acid chain: Recombination protein RecR (201 aa).

The C4-type zinc-finger motif lies at 58–73; the sequence is CPECGLLTEEERCGLC. One can recognise a Toprim domain in the interval 81–176; that stretch reads TLLCVVESSA…RTTRIAHGVP (96 aa).

It belongs to the RecR family.

Functionally, may play a role in DNA repair. It seems to be involved in an RecBC-independent recombinational process of DNA repair. It may act with RecF and RecO. This chain is Recombination protein RecR, found in Halorhodospira halophila (strain DSM 244 / SL1) (Ectothiorhodospira halophila (strain DSM 244 / SL1)).